The primary structure comprises 275 residues: MNTSHYSVLGHTVPYPKVYDPSLLFPISRAVGRTQIGIGVVLPFVGEDRWHAYELSWLDARGKPCVATATFHVPCDSPYLIESKSLKLYLNSFSAEVFNRAEALRLRIAADLSACAGAAVAVEFGLPPVGSGDKEISLDRLNVDIEDYGPPNPDYLSNVAQNLVEEMVEETLTSTLFKSNCPVTGQPDWASVTVRYFGMPIDHEGLLRYFISFRHHAEFHEQCVERIFQDVLQRCAPQCLAVEARYTRRGGLDINPLRTTSEMAWPLSVFRDPRQ.

81–83 (IES) serves as a coordination point for substrate. 83 to 84 (SK) is a binding site for NADPH. The Thioimide intermediate role is filled by C181. Catalysis depends on D188, which acts as the Proton donor. Residue 220–221 (HE) participates in substrate binding. NADPH is bound at residue 249–250 (RG).

This sequence belongs to the GTP cyclohydrolase I family. QueF type 2 subfamily. Homodimer.

It localises to the cytoplasm. The enzyme catalyses 7-aminomethyl-7-carbaguanine + 2 NADP(+) = 7-cyano-7-deazaguanine + 2 NADPH + 3 H(+). The protein operates within tRNA modification; tRNA-queuosine biosynthesis. Its function is as follows. Catalyzes the NADPH-dependent reduction of 7-cyano-7-deazaguanine (preQ0) to 7-aminomethyl-7-deazaguanine (preQ1). The sequence is that of NADPH-dependent 7-cyano-7-deazaguanine reductase from Xylella fastidiosa (strain M23).